The following is a 554-amino-acid chain: Laccase-8 (554 aa).

Positions 1–21 are cleaved as a signal peptide; the sequence is MASAAMLVPLVLVLCTAAASA. Plastocyanin-like domains lie at 29 to 145 and 156 to 309; these read KVGG…PRNG and EEIP…YKGV. The Cu cation site is built by His-79 and His-81. N-linked (GlcNAc...) asparagine glycosylation is found at Asn-107 and Asn-113. Cu cation is bound by residues His-124 and His-126. N-linked (GlcNAc...) asparagine glycosylation is found at Asn-271 and Asn-369. A Plastocyanin-like 3 domain is found at 411 to 537; that stretch reads DFPDFPPPMQ…AMVFEVLNGP (127 aa). His-455, His-458, His-460, His-516, Cys-517, His-518, and His-522 together coordinate Cu cation.

It belongs to the multicopper oxidase family. Cu cation serves as cofactor.

It is found in the secreted. The protein resides in the extracellular space. It localises to the apoplast. The enzyme catalyses 4 hydroquinone + O2 = 4 benzosemiquinone + 2 H2O. Functionally, lignin degradation and detoxification of lignin-derived products. This chain is Laccase-8 (LAC8), found in Oryza sativa subsp. japonica (Rice).